Reading from the N-terminus, the 328-residue chain is Telomere-binding protein cav (328 aa).

Residues 107–320 (RRKMVQPYPE…NISLQNSGSE (214 aa)) are required for binding to Su(var)205. The interval 139-228 (DRWQKQKSQN…EFQTEHTDCP (90 aa)) is disordered. 2 stretches are compositionally biased toward polar residues: residues 144–167 (QKSQNRSAPESSSALVGHASQQDS) and 180–189 (ANTNRYSVSQ). Short sequence motifs (su(var)205-binding Pro-containing repeat) lie at residues 228–232 (PETQM) and 281–287 (PETETNE). Residues 295-319 (INSESMSIGPSIDSEGNISLQNSGS) show a composition bias toward polar residues. The interval 295–328 (INSESMSIGPSIDSEGNISLQNSGSEPIDVDSMA) is disordered.

In terms of assembly, interacts (via C-terminus) with Su(var)205 dimer (via hinge and chromoshadow domain) and with moi to form the terminin, telomere-capping, complex. Interacts with HP6, which is also part of the terminin complex.

The protein localises to the nucleus. It localises to the chromosome. Its subcellular location is the telomere. In terms of biological role, binds to chromosome ends in a sequence-dependent manner and is required for telomere capping. The chain is Telomere-binding protein cav from Drosophila erecta (Fruit fly).